A 255-amino-acid chain; its full sequence is 4-hydroxy-tetrahydrodipicolinate reductase (255 aa).

NAD(+) contacts are provided by residues Gly8 to Met13, Ala88 to Thr90, and Ser112 to Met115. Residue His144 is the Proton donor/acceptor of the active site. Position 145 (His145) interacts with (S)-2,3,4,5-tetrahydrodipicolinate. Residue Lys148 is the Proton donor of the active site. Residue Gly154–Thr155 coordinates (S)-2,3,4,5-tetrahydrodipicolinate.

This sequence belongs to the DapB family.

The protein resides in the cytoplasm. The catalysed reaction is (S)-2,3,4,5-tetrahydrodipicolinate + NAD(+) + H2O = (2S,4S)-4-hydroxy-2,3,4,5-tetrahydrodipicolinate + NADH + H(+). The enzyme catalyses (S)-2,3,4,5-tetrahydrodipicolinate + NADP(+) + H2O = (2S,4S)-4-hydroxy-2,3,4,5-tetrahydrodipicolinate + NADPH + H(+). Its pathway is amino-acid biosynthesis; L-lysine biosynthesis via DAP pathway; (S)-tetrahydrodipicolinate from L-aspartate: step 4/4. Its function is as follows. Catalyzes the conversion of 4-hydroxy-tetrahydrodipicolinate (HTPA) to tetrahydrodipicolinate. The sequence is that of 4-hydroxy-tetrahydrodipicolinate reductase from Sulfurovum sp. (strain NBC37-1).